Reading from the N-terminus, the 109-residue chain is Nucleoid-associated protein LBUL_1514 (109 aa).

The protein belongs to the YbaB/EbfC family. In terms of assembly, homodimer.

The protein resides in the cytoplasm. It localises to the nucleoid. Binds to DNA and alters its conformation. May be involved in regulation of gene expression, nucleoid organization and DNA protection. The protein is Nucleoid-associated protein LBUL_1514 of Lactobacillus delbrueckii subsp. bulgaricus (strain ATCC BAA-365 / Lb-18).